We begin with the raw amino-acid sequence, 216 residues long: Somatotropin (216 aa).

The first 26 residues, 1–26 (MAADPQSSVLLAFALLCLPWPQEVGA), serve as a signal peptide directing secretion. Residue His-45 participates in Zn(2+) binding. Cys-78 and Cys-189 are oxidised to a cystine. Phosphoserine is present on Ser-131. Glu-198 lines the Zn(2+) pocket. Cysteines 206 and 214 form a disulfide.

Belongs to the somatotropin/prolactin family.

It is found in the secreted. Plays an important role in growth control. Its major role in stimulating body growth is to stimulate the liver and other tissues to secrete IGF1. It stimulates both the differentiation and proliferation of myoblasts. It also stimulates amino acid uptake and protein synthesis in muscle and other tissues. The sequence is that of Somatotropin (GH1) from Ailuropoda melanoleuca (Giant panda).